A 532-amino-acid polypeptide reads, in one-letter code: Pre-piRNA 3'-exonuclease trimmer (532 aa).

The Mg(2+) site is built by Asp-28, Glu-30, Asp-270, and Asp-365. Residues 503 to 523 (AGRFAIWSGSIVTGGLALYLI) form a helical membrane-spanning segment.

The protein belongs to the CAF1 family. Interacts with Papi/Tdrkh; interaction takes place on the mitochondrial surface and recruits PNLDC1/trimmer to PIWI-bound pre-piRNAs. Mg(2+) serves as cofactor.

It localises to the mitochondrion outer membrane. 3'-5' exonuclease that specifically cleaves precursor piRNAs (pre-piRNAs) at their 3' ends. Trims pre-piRNAs to their mature size, a process required for piRNAs maturation and stabilization, and subsequent pre-piRNAs 2'-O-methylation. The piRNA metabolic process mediates the repression of transposable elements during meiosis by forming complexes composed of piRNAs and Piwi proteins and govern the methylation and subsequent repression of transposons. The chain is Pre-piRNA 3'-exonuclease trimmer from Bombyx mori (Silk moth).